A 598-amino-acid chain; its full sequence is Trichothecene efflux pump TRI12 (598 aa).

The chain crosses the membrane as a helical span at residues 42-62 (IVASFAAFSMNVVATYFVLQA). N79 is a glycosylation site (N-linked (GlcNAc...) asparagine). Transmembrane regions (helical) follow at residues 109 to 129 (PFVI…CTAT) and 135 to 155 (LAAM…PLFI). The N-linked (GlcNAc...) asparagine glycan is linked to N161. A run of 10 helical transmembrane segments spans residues 165 to 185 (FLGL…SPYL), 197 to 217 (WIFY…IIWY), 241 to 261 (WIGI…VSWG), 273 to 293 (VIGL…YEVY), 312 to 332 (FVCI…LVIM), 356 to 376 (ATAS…FHLV), 381 to 401 (WQIL…SSIN), 409 to 429 (IALS…TMLL), 442 to 462 (AFAV…AAFI), and 533 to 553 (ANVY…SLCM). Residues 579-598 (LEGNSESQPSPIILSMADKE) are disordered.

The protein belongs to the major facilitator superfamily.

The protein localises to the cell membrane. Efflux pump that provides the dual role of trichothecene export and self-protection by allowing the fungus to evade the harmful effect of its own trichothecene production. The protein is Trichothecene efflux pump TRI12 of Fusarium sporotrichioides.